We begin with the raw amino-acid sequence, 231 residues long: ADP-ribose pyrophosphatase (231 aa).

The residue at position 2 (Phe2) is an N-acetylserine. Residues Trp46, 64–65 (WD), Arg69, and Arg103 each bind substrate. The 140-residue stretch at 75 to 214 (GGVDGIGILT…DQQGYKLDAR (140 aa)) folds into the Nudix hydrolase domain. Ala115 provides a ligand contact to Mg(2+). A Nudix box motif is present at residues 116–137 (GLIDAGEDIDTAALRELKEETG). Leu117 is a binding site for substrate. Mg(2+)-binding residues include Glu131 and Glu135. Asp152 serves as a coordination point for substrate. Glu185 is a Mg(2+) binding site.

Belongs to the Nudix hydrolase family. NudF subfamily. Requires Mg(2+) as cofactor. Mn(2+) serves as cofactor.

It carries out the reaction ADP-D-ribose + H2O = D-ribose 5-phosphate + AMP + 2 H(+). The polypeptide is ADP-ribose pyrophosphatase (YSA1) (Saccharomyces cerevisiae (strain ATCC 204508 / S288c) (Baker's yeast)).